Here is a 267-residue protein sequence, read N- to C-terminus: Sulfate transporter CysZ (267 aa).

4 helical membrane-spanning segments follow: residues 29–49, 73–93, 149–169, and 212–232; these read FVIM…WLFI, ILLI…FTTL, IILF…PIIV, and GLVM…PVAV.

Belongs to the CysZ family.

It is found in the cell inner membrane. Its function is as follows. High affinity, high specificity proton-dependent sulfate transporter, which mediates sulfate uptake. Provides the sulfur source for the cysteine synthesis pathway. This is Sulfate transporter CysZ from Pasteurella multocida (strain Pm70).